Reading from the N-terminus, the 273-residue chain is Peptidoglycan-N-acetylglucosamine deacetylase BC_1974 (273 aa).

Residues Ile10–Ile30 traverse the membrane as a helical segment. The 187-residue stretch at Lys69 to Glu255 folds into the NodB homology domain. The active-site Proton acceptor is the Asp76. The Zn(2+) site is built by Asp77, His126, and His130. The active-site Proton donor is the His230.

This sequence belongs to the polysaccharide deacetylase family. Requires Zn(2+) as cofactor. Co(2+) serves as cofactor. It depends on Ni(2+) as a cofactor.

The protein localises to the cell membrane. The catalysed reaction is peptidoglycan-N-acetyl-D-glucosamine + H2O = peptidoglycan-D-glucosamine + acetate.. Its activity is regulated as follows. Inhibited by the hydroxamate N-hydroxy-4-(naphthalene-1-yl)benzamide (NHNB). Catalyzes the deacetylation of N-acetylglucosamine (GlcNAc) residues in peptidoglycan. The polypeptide is Peptidoglycan-N-acetylglucosamine deacetylase BC_1974 (Bacillus cereus (strain ATCC 14579 / DSM 31 / CCUG 7414 / JCM 2152 / NBRC 15305 / NCIMB 9373 / NCTC 2599 / NRRL B-3711)).